A 193-amino-acid polypeptide reads, in one-letter code: Holliday junction branch migration complex subunit RuvA (193 aa).

The tract at residues 1 to 64 is domain I; it reads MIGRIAGTLI…EDAHLLYGFG (64 aa). The tract at residues 65-143 is domain II; it reads SAAERNTFRE…AELGHAPGAA (79 aa). The tract at residues 144-151 is flexible linker; it reads PVHDSAVD. The tract at residues 151 to 193 is domain III; sequence DILNALLALGYSEKEAATAIKQVPAGTGVSDGIKLALKALSKA.

Belongs to the RuvA family. As to quaternary structure, homotetramer. Forms an RuvA(8)-RuvB(12)-Holliday junction (HJ) complex. HJ DNA is sandwiched between 2 RuvA tetramers; dsDNA enters through RuvA and exits via RuvB. An RuvB hexamer assembles on each DNA strand where it exits the tetramer. Each RuvB hexamer is contacted by two RuvA subunits (via domain III) on 2 adjacent RuvB subunits; this complex drives branch migration. In the full resolvosome a probable DNA-RuvA(4)-RuvB(12)-RuvC(2) complex forms which resolves the HJ.

The protein resides in the cytoplasm. The RuvA-RuvB-RuvC complex processes Holliday junction (HJ) DNA during genetic recombination and DNA repair, while the RuvA-RuvB complex plays an important role in the rescue of blocked DNA replication forks via replication fork reversal (RFR). RuvA specifically binds to HJ cruciform DNA, conferring on it an open structure. The RuvB hexamer acts as an ATP-dependent pump, pulling dsDNA into and through the RuvAB complex. HJ branch migration allows RuvC to scan DNA until it finds its consensus sequence, where it cleaves and resolves the cruciform DNA. This is Holliday junction branch migration complex subunit RuvA from Cupriavidus pinatubonensis (strain JMP 134 / LMG 1197) (Cupriavidus necator (strain JMP 134)).